Reading from the N-terminus, the 426-residue chain is Glutamate-1-semialdehyde 2,1-aminomutase (426 aa).

Residue K267 is modified to N6-(pyridoxal phosphate)lysine.

The protein belongs to the class-III pyridoxal-phosphate-dependent aminotransferase family. HemL subfamily. As to quaternary structure, homodimer. The cofactor is pyridoxal 5'-phosphate.

It localises to the cytoplasm. The catalysed reaction is (S)-4-amino-5-oxopentanoate = 5-aminolevulinate. It participates in porphyrin-containing compound metabolism; protoporphyrin-IX biosynthesis; 5-aminolevulinate from L-glutamyl-tRNA(Glu): step 2/2. The chain is Glutamate-1-semialdehyde 2,1-aminomutase from Bdellovibrio bacteriovorus (strain ATCC 15356 / DSM 50701 / NCIMB 9529 / HD100).